A 44-amino-acid chain; its full sequence is Cytochrome b559 subunit beta (44 aa).

A helical membrane pass occupies residues W19–A35. Residue H23 coordinates heme.

It belongs to the PsbE/PsbF family. Heterodimer of an alpha subunit and a beta subunit. PSII is composed of 1 copy each of membrane proteins PsbA, PsbB, PsbC, PsbD, PsbE, PsbF, PsbH, PsbI, PsbJ, PsbK, PsbL, PsbM, PsbT, PsbX, PsbY, PsbZ, Psb30/Ycf12, peripheral proteins PsbO, CyanoQ (PsbQ), PsbU, PsbV and a large number of cofactors. It forms dimeric complexes. The cofactor is heme b.

The protein localises to the cellular thylakoid membrane. Its function is as follows. This b-type cytochrome is tightly associated with the reaction center of photosystem II (PSII). PSII is a light-driven water:plastoquinone oxidoreductase that uses light energy to abstract electrons from H(2)O, generating O(2) and a proton gradient subsequently used for ATP formation. It consists of a core antenna complex that captures photons, and an electron transfer chain that converts photonic excitation into a charge separation. This chain is Cytochrome b559 subunit beta, found in Rippkaea orientalis (strain PCC 8801 / RF-1) (Cyanothece sp. (strain PCC 8801)).